The sequence spans 181 residues: Heavy metal-associated isoprenylated plant protein 46 (181 aa).

The HMA domain occupies 2-71 (KQKILIRVTM…KVAFAELVSV (70 aa)). Positions 74-121 (VEPPKKEDEKKGGDGKGAEGKGGDQKGGDKKGPDDKEPPEPKPVPCYP) are disordered. Residues 75–113 (EPPKKEDEKKGGDGKGAEGKGGDQKGGDKKGPDDKEPPE) are compositionally biased toward basic and acidic residues. C178 bears the Cysteine methyl ester mark. C178 is lipidated: S-farnesyl cysteine. The propeptide at 179–181 (KIM) is removed in mature form.

Belongs to the HIPP family.

Functionally, probable heavy-metal-binding protein. The chain is Heavy metal-associated isoprenylated plant protein 46 from Arabidopsis thaliana (Mouse-ear cress).